The following is a 193-amino-acid chain: Acyl carrier protein phosphodiesterase (193 aa).

Belongs to the AcpH family.

The enzyme catalyses holo-[ACP] + H2O = apo-[ACP] + (R)-4'-phosphopantetheine + H(+). Converts holo-ACP to apo-ACP by hydrolytic cleavage of the phosphopantetheine prosthetic group from ACP. The chain is Acyl carrier protein phosphodiesterase from Salmonella newport (strain SL254).